We begin with the raw amino-acid sequence, 157 residues long: Phosphopantetheine adenylyltransferase (157 aa).

S8 provides a ligand contact to substrate. ATP-binding positions include 8–9 (SF) and H16. Substrate is bound by residues K40, T72, and R86. ATP-binding positions include 87 to 89 (GLR), E97, and 122 to 128 (YSFLSSS).

This sequence belongs to the bacterial CoaD family. Homohexamer. Mg(2+) is required as a cofactor.

Its subcellular location is the cytoplasm. It catalyses the reaction (R)-4'-phosphopantetheine + ATP + H(+) = 3'-dephospho-CoA + diphosphate. It participates in cofactor biosynthesis; coenzyme A biosynthesis; CoA from (R)-pantothenate: step 4/5. Functionally, reversibly transfers an adenylyl group from ATP to 4'-phosphopantetheine, yielding dephospho-CoA (dPCoA) and pyrophosphate. The polypeptide is Phosphopantetheine adenylyltransferase (Gloeothece citriformis (strain PCC 7424) (Cyanothece sp. (strain PCC 7424))).